We begin with the raw amino-acid sequence, 485 residues long: MELYQLTIHELQNKIRQGGVTSTAIVNSVFGRIDAVEENVHSYITLMRESALEEAQKADEQIRTGEINALTGIPVALKDIYCTRGVRTTCGSLILDNFIPPYDATVVVKLREAGAVFTGKTNMDEFAMGSSTETSYYGFTRNPWDLERIPGGSSGGSAAAVAADECIAALGSDTGGSIRQPAALCGVVGMKPTYGRVSRFGLIAFASSLDQIGPFTKDVEDCAILLNVIAGYDLRDSTSVPVDVPDYRDYLNRGIEGWTVGIPKEYFIEGIDPEVRGAIEQAIRTVEGLGARCREISLPHTDYCVAVYYIIAPAEASSNLARYDGVKYGFRAADCRDLLDMYKKTRSAGFGTEVKRRVMLGTYSLSSGYYDAYYKKASQVRGLIKRDFEEALKDCNVILTPTTPTPAFTIGEKTDDPMQMYLSDIFTISANLAGIPGISVPCGYTQSGLPVGIQFLAGHFEEGKLLQIASAYERNAHIEKRRPIL.

Active-site charge relay system residues include K78 and S153. Residue S177 is the Acyl-ester intermediate of the active site.

The protein belongs to the amidase family. GatA subfamily. In terms of assembly, heterotrimer of A, B and C subunits.

It catalyses the reaction L-glutamyl-tRNA(Gln) + L-glutamine + ATP + H2O = L-glutaminyl-tRNA(Gln) + L-glutamate + ADP + phosphate + H(+). Allows the formation of correctly charged Gln-tRNA(Gln) through the transamidation of misacylated Glu-tRNA(Gln) in organisms which lack glutaminyl-tRNA synthetase. The reaction takes place in the presence of glutamine and ATP through an activated gamma-phospho-Glu-tRNA(Gln). The polypeptide is Glutamyl-tRNA(Gln) amidotransferase subunit A (Syntrophus aciditrophicus (strain SB)).